We begin with the raw amino-acid sequence, 525 residues long: Probable protein kinase UbiB (525 aa).

Residues 118–500 (EFERVPVASA…QRRTNRLLQA (383 aa)) enclose the Protein kinase domain. ATP is bound by residues 124–132 (VASASIAQV) and lysine 150. Aspartate 285 (proton acceptor) is an active-site residue. Residues 501 to 521 (LLVFGLAVGAGAVIARVLIVL) form a helical membrane-spanning segment.

It belongs to the ABC1 family. UbiB subfamily.

The protein resides in the cell inner membrane. It participates in cofactor biosynthesis; ubiquinone biosynthesis [regulation]. Functionally, is probably a protein kinase regulator of UbiI activity which is involved in aerobic coenzyme Q (ubiquinone) biosynthesis. The sequence is that of Probable protein kinase UbiB from Burkholderia mallei (strain SAVP1).